The primary structure comprises 847 residues: Alanine--tRNA ligase (847 aa).

Zn(2+) contacts are provided by H554, H558, C656, and H660.

The protein belongs to the class-II aminoacyl-tRNA synthetase family. Zn(2+) is required as a cofactor.

Its subcellular location is the cytoplasm. It carries out the reaction tRNA(Ala) + L-alanine + ATP = L-alanyl-tRNA(Ala) + AMP + diphosphate. Functionally, catalyzes the attachment of alanine to tRNA(Ala) in a two-step reaction: alanine is first activated by ATP to form Ala-AMP and then transferred to the acceptor end of tRNA(Ala). Also edits incorrectly charged Ser-tRNA(Ala) and Gly-tRNA(Ala) via its editing domain. The chain is Alanine--tRNA ligase from Helicobacter pylori (strain Shi470).